Consider the following 352-residue polypeptide: Probable protein phosphatase 2C 56 (352 aa).

Disordered regions lie at residues 18–37 and 53–87; these read RGRRVAASPSPGGTPAASRG and SSSSFAPPRMQARRAAGSAARTRSPSQSNGWITGG. 2 stretches are compositionally biased toward low complexity: residues 23-37 and 53-75; these read AASPSPGGTPAASRG and SSSSFAPPRMQARRAAGSAARTR. Residues 96-343 form the PPM-type phosphatase domain; the sequence is SWDYSSFKGR…DNITCIVLQF (248 aa). Mn(2+)-binding residues include aspartate 132, glycine 133, aspartate 295, and aspartate 334.

It belongs to the PP2C family. Mg(2+) is required as a cofactor. It depends on Mn(2+) as a cofactor.

It carries out the reaction O-phospho-L-seryl-[protein] + H2O = L-seryl-[protein] + phosphate. The enzyme catalyses O-phospho-L-threonyl-[protein] + H2O = L-threonyl-[protein] + phosphate. In Oryza sativa subsp. japonica (Rice), this protein is Probable protein phosphatase 2C 56.